The following is a 577-amino-acid chain: Maltase A1 (577 aa).

The signal sequence occupies residues 1–19 (MRPQSAACLLLAIVGFVGA). Asparagine 119 and asparagine 151 each carry an N-linked (GlcNAc...) asparagine glycan. Aspartate 221 serves as the catalytic Nucleophile. A glycan (N-linked (GlcNAc...) asparagine) is linked at asparagine 244. The active-site Proton donor is the glutamate 297. N-linked (GlcNAc...) asparagine glycans are attached at residues asparagine 315 and asparagine 331.

The protein belongs to the glycosyl hydrolase 13 family.

It carries out the reaction Hydrolysis of terminal, non-reducing (1-&gt;4)-linked alpha-D-glucose residues with release of alpha-D-glucose.. In Drosophila melanogaster (Fruit fly), this protein is Maltase A1 (Mal-A1).